The following is a 118-amino-acid chain: Large ribosomal subunit protein bL19 (118 aa).

It belongs to the bacterial ribosomal protein bL19 family.

In terms of biological role, this protein is located at the 30S-50S ribosomal subunit interface and may play a role in the structure and function of the aminoacyl-tRNA binding site. This chain is Large ribosomal subunit protein bL19, found in Frankia casuarinae (strain DSM 45818 / CECT 9043 / HFP020203 / CcI3).